Reading from the N-terminus, the 326-residue chain is MFISISAGIVTFLLTLVEIPAFIQFYRKAQITGQQMHEDVKQHQAKAGTPTMGGLVFLITSVLVAFFFALFSSQFSNNVGMILFILVLYGLVGFLDDFLKVFRKINEGLNPKQKLALQLLGGVIFYLFYERGGDILSVFGYPVHLGFFYIFFALFWLVGFSNAVNLTDGVDGLASISVVISLSAYGVIAYVQGQMDILLVILAMIGGLLGFFIFNHKPAKVFMGDVGSLALGGMLAAISMALHQEWTLLIIGIVYVFETTSVMMQVSYFKLTGGKRIFRMTPVHHHFELGGLSGKGNPWSEWKVDFFFWGVGLLASLLTLAILYLM.

A run of 9 helical transmembrane segments spans residues 3-23 (ISISAGIVTFLLTLVEIPAFI), 51-71 (TMGGLVFLITSVLVAFFFALF), 79-99 (VGMILFILVLYGLVGFLDDFL), 115-135 (LALQLLGGVIFYLFYERGGDI), 138-158 (VFGYPVHLGFFYIFFALFWLV), 169-189 (GVDGLASISVVISLSAYGVIA), 195-215 (MDILLVILAMIGGLLGFFIFN), 221-243 (VFMGDVGSLALGGMLAAISMALH), and 306-326 (FFFWGVGLLASLLTLAILYLM).

The protein belongs to the glycosyltransferase 4 family. MraY subfamily. It depends on Mg(2+) as a cofactor.

The protein resides in the cell membrane. It catalyses the reaction UDP-N-acetyl-alpha-D-muramoyl-L-alanyl-gamma-D-glutamyl-L-lysyl-D-alanyl-D-alanine + di-trans,octa-cis-undecaprenyl phosphate = Mur2Ac(oyl-L-Ala-gamma-D-Glu-L-Lys-D-Ala-D-Ala)-di-trans,octa-cis-undecaprenyl diphosphate + UMP. Its pathway is cell wall biogenesis; peptidoglycan biosynthesis. Functionally, catalyzes the initial step of the lipid cycle reactions in the biosynthesis of the cell wall peptidoglycan: transfers peptidoglycan precursor phospho-MurNAc-pentapeptide from UDP-MurNAc-pentapeptide onto the lipid carrier undecaprenyl phosphate, yielding undecaprenyl-pyrophosphoryl-MurNAc-pentapeptide, known as lipid I. The chain is Phospho-N-acetylmuramoyl-pentapeptide-transferase from Streptococcus pneumoniae (strain 70585).